The sequence spans 540 residues: Cytochrome P450 27C1 (540 aa).

Residue C486 participates in heme binding.

The protein belongs to the cytochrome P450 family. The cofactor is heme. In terms of tissue distribution, following L-thyroxine, expressed in the retinal pigment epithelium (at protein level).

It localises to the membrane. The enzyme catalyses all-trans-retinol + 2 reduced [adrenodoxin] + O2 + 2 H(+) = all-trans-3,4-didehydroretinol + 2 oxidized [adrenodoxin] + 2 H2O. In terms of biological role, efficiently catalyzes the conversion of all-trans retinol (also called vitamin A1, the precursor of 11-cis retinal) to 3,4-didehydroretinol (also called vitamin A2, the precursor of 11-cis 3,4-didehydroretinal). Also acts on all-trans retinal and all-trans retinoic acid. The replacement of 11-cis retinal chromophore in photopigments with 11-cis 3,4-didehydroretinal enhances sensitivity to long-wavelength light. This may improve vision in fresh water which is often turbid. In Danio rerio (Zebrafish), this protein is Cytochrome P450 27C1 (cyp27c1).